We begin with the raw amino-acid sequence, 258 residues long: Protein U52 (258 aa).

It belongs to the herpesviridae UL79 family.

In Human herpesvirus 6B (strain Z29) (HHV-6 variant B), this protein is Protein U52 (U52).